The primary structure comprises 377 residues: Flagellin D (377 aa).

Coiled-coil stretches lie at residues 103–129 (SNSK…IAET) and 310–339 (AFQN…IKDT).

Belongs to the bacterial flagellin family. Heteromer of multiple flagellin subunits including FlaA, FlaB, FlaC, FlaD and FlaE.

The protein localises to the secreted. The protein resides in the bacterial flagellum. Its function is as follows. Flagellin is the subunit protein which polymerizes to form the filaments of bacterial flagella. FlaD is not essential for flagellar synthesis and motility. The protein is Flagellin D (flaD) of Vibrio cholerae serotype O1 (strain ATCC 39315 / El Tor Inaba N16961).